Consider the following 322-residue polypeptide: Cytochrome c biogenesis protein CcsA (322 aa).

8 helical membrane-spanning segments follow: residues 9–29, 44–64, 71–91, 98–118, 143–163, 226–246, 253–273, and 287–307; these read ILTH…LITL, GMIA…IYSG, LYES…VPYF, LTTI…SGLL, MILS…LLVI, VISL…VWAN, WSWD…AIYL, and AIVA…VNLL.

This sequence belongs to the CcmF/CycK/Ccl1/NrfE/CcsA family. May interact with Ccs1.

It localises to the plastid. The protein localises to the chloroplast thylakoid membrane. In terms of biological role, required during biogenesis of c-type cytochromes (cytochrome c6 and cytochrome f) at the step of heme attachment. The protein is Cytochrome c biogenesis protein CcsA of Helianthus annuus (Common sunflower).